Here is a 135-residue protein sequence, read N- to C-terminus: Large ribosomal subunit protein mL41A (135 aa).

The transit peptide at 1–13 (MGLISKIARGLVR) directs the protein to the mitochondrion.

This sequence belongs to the mitochondrion-specific ribosomal protein mL41 family. Component of the mitochondrial ribosome large subunit (39S) which comprises a 16S rRNA and about 50 distinct proteins.

Its subcellular location is the mitochondrion. Functionally, component of the mitochondrial ribosome large subunit. Also involved in apoptosis and cell cycle. The protein is Large ribosomal subunit protein mL41A (mrpl41-a) of Xenopus laevis (African clawed frog).